The chain runs to 393 residues: Chalcone synthase 2 (393 aa).

Cys166 is an active-site residue.

It belongs to the thiolase-like superfamily. Chalcone/stilbene synthases family.

It carries out the reaction (E)-4-coumaroyl-CoA + 3 malonyl-CoA + 3 H(+) = 2',4,4',6'-tetrahydroxychalcone + 3 CO2 + 4 CoA. It functions in the pathway secondary metabolite biosynthesis; flavonoid biosynthesis. Its function is as follows. The primary product of this enzyme is 4,2',4',6'-tetrahydroxychalcone (also termed naringenin-chalcone or chalcone) which can under specific conditions spontaneously isomerize into naringenin. The protein is Chalcone synthase 2 (CHS2) of Ruta graveolens (Common rue).